The primary structure comprises 181 residues: Adenine phosphoribosyltransferase (181 aa).

It belongs to the purine/pyrimidine phosphoribosyltransferase family. As to quaternary structure, homodimer.

Its subcellular location is the cytoplasm. It carries out the reaction AMP + diphosphate = 5-phospho-alpha-D-ribose 1-diphosphate + adenine. Its pathway is purine metabolism; AMP biosynthesis via salvage pathway; AMP from adenine: step 1/1. Its function is as follows. Catalyzes a salvage reaction resulting in the formation of AMP, that is energically less costly than de novo synthesis. The sequence is that of Adenine phosphoribosyltransferase from Aliivibrio fischeri (strain ATCC 700601 / ES114) (Vibrio fischeri).